A 245-amino-acid chain; its full sequence is 1-acyl-sn-glycerol-3-phosphate acyltransferase (245 aa).

Position 1 is an N-formylmethionine (Met1). The HXXXXD motif motif lies at 73-78 (HQNNYD).

It belongs to the 1-acyl-sn-glycerol-3-phosphate acyltransferase family.

It is found in the cell inner membrane. It carries out the reaction a 1-acyl-sn-glycero-3-phosphate + an acyl-CoA = a 1,2-diacyl-sn-glycero-3-phosphate + CoA. It catalyses the reaction a fatty acyl-[ACP] + a 1-acyl-sn-glycero-3-phosphate = a 1,2-diacyl-sn-glycero-3-phosphate + holo-[ACP]. Its pathway is phospholipid metabolism; CDP-diacylglycerol biosynthesis; CDP-diacylglycerol from sn-glycerol 3-phosphate: step 2/3. Functionally, converts lysophosphatidic acid (LPA) into phosphatidic acid by incorporating an acyl moiety at the 2 position. This enzyme can utilize either acyl-CoA or acyl-ACP as the fatty acyl donor. The chain is 1-acyl-sn-glycerol-3-phosphate acyltransferase (plsC) from Escherichia coli (strain K12).